We begin with the raw amino-acid sequence, 487 residues long: Rhoptry apical surface protein 1 (487 aa).

Residues 337-487 (EVAMSGRGGH…EEEQPLLFTQ (151 aa)) are disordered. 2 stretches are compositionally biased toward basic and acidic residues: residues 385 to 399 (DGIR…DRRA) and 454 to 475 (EKNE…GVEY).

As to quaternary structure, interacts with RASP2.

Its subcellular location is the cytoplasmic vesicle. The protein localises to the secretory vesicle. It localises to the rhoptry membrane. This Toxoplasma gondii (strain ATCC 50853 / GT1) protein is Rhoptry apical surface protein 1.